Consider the following 476-residue polypeptide: Siroheme synthase (476 aa).

The tract at residues 1–203 (MHYFPVFADL…RQTEAAKKEL (203 aa)) is precorrin-2 dehydrogenase /sirohydrochlorin ferrochelatase. NAD(+) contacts are provided by residues 22–23 (GV) and 43–44 (QK). The residue at position 128 (S128) is a Phosphoserine. The uroporphyrinogen-III C-methyltransferase stretch occupies residues 214 to 476 (GFVSLVGAGP…LDSLRIESVA (263 aa)). P223 is a binding site for S-adenosyl-L-methionine. The active-site Proton acceptor is D246. The active-site Proton donor is the K268. S-adenosyl-L-methionine contacts are provided by residues 299–301 (GGD), V304, 329–330 (TA), M381, and G410.

This sequence in the N-terminal section; belongs to the precorrin-2 dehydrogenase / sirohydrochlorin ferrochelatase family. In the C-terminal section; belongs to the precorrin methyltransferase family.

The catalysed reaction is uroporphyrinogen III + 2 S-adenosyl-L-methionine = precorrin-2 + 2 S-adenosyl-L-homocysteine + H(+). It carries out the reaction precorrin-2 + NAD(+) = sirohydrochlorin + NADH + 2 H(+). It catalyses the reaction siroheme + 2 H(+) = sirohydrochlorin + Fe(2+). The protein operates within cofactor biosynthesis; adenosylcobalamin biosynthesis; precorrin-2 from uroporphyrinogen III: step 1/1. It functions in the pathway cofactor biosynthesis; adenosylcobalamin biosynthesis; sirohydrochlorin from precorrin-2: step 1/1. Its pathway is porphyrin-containing compound metabolism; siroheme biosynthesis; precorrin-2 from uroporphyrinogen III: step 1/1. It participates in porphyrin-containing compound metabolism; siroheme biosynthesis; siroheme from sirohydrochlorin: step 1/1. The protein operates within porphyrin-containing compound metabolism; siroheme biosynthesis; sirohydrochlorin from precorrin-2: step 1/1. In terms of biological role, multifunctional enzyme that catalyzes the SAM-dependent methylations of uroporphyrinogen III at position C-2 and C-7 to form precorrin-2 via precorrin-1. Then it catalyzes the NAD-dependent ring dehydrogenation of precorrin-2 to yield sirohydrochlorin. Finally, it catalyzes the ferrochelation of sirohydrochlorin to yield siroheme. The chain is Siroheme synthase from Actinobacillus succinogenes (strain ATCC 55618 / DSM 22257 / CCUG 43843 / 130Z).